Reading from the N-terminus, the 1764-residue chain is Cilia- and flagella-associated protein 44 (1764 aa).

7 WD repeats span residues Gly-115–Arg-157, Ala-160–Lys-199, Gly-208–Thr-248, Cys-255–Pro-294, His-361–Glu-400, Ala-454–Thr-493, and Val-495–Leu-534. Residues Gln-570–Leu-654 are disordered. Positions Lys-575–Gly-584 are enriched in basic residues. Basic and acidic residues-rich tracts occupy residues Lys-585 to Gly-596 and Gly-604 to Ala-628. Acidic residues predominate over residues Glu-629–Asp-641. WD repeat units lie at residues Ser-649 to Ala-692, Ala-707 to Met-752, and Gln-753 to Pro-791. A coiled-coil region spans residues Tyr-821–Leu-850. Disordered regions lie at residues Ala-972–Ala-1003 and Lys-1426–Gly-1468. The span at Gly-1434 to Glu-1462 shows a compositional bias: acidic residues. Coiled coils occupy residues Asp-1479 to Gln-1517, Leu-1567 to Ile-1674, and Glu-1729 to Lys-1758.

The protein belongs to the CFAP44 family.

The protein resides in the cell projection. It is found in the cilium. It localises to the flagellum. Its subcellular location is the cytoplasm. The protein localises to the cytoskeleton. The protein resides in the flagellum axoneme. Functionally, flagellar protein involved in sperm flagellum axoneme organization and function. The sequence is that of Cilia- and flagella-associated protein 44 from Chlamydomonas reinhardtii (Chlamydomonas smithii).